The following is a 557-amino-acid chain: Tektin-5 (557 aa).

Positions 302–386 form a coiled coil; sequence DNIRHAQNMR…LLERAIVAKE (85 aa). 6 tandem repeats follow at residues 507–512, 513–518, 519–524, 525–530, 531–536, and 537–541. Positions 507 to 541 are 6 X 6 AA approximate tandem repeats of C-[GSK]-G-[GSPH]-A-[SLP]; sequence CSGSALCKGPASCGGGASCGGGASCGGHAPCGSAL.

Belongs to the tektin family. As to quaternary structure, microtubule inner protein component of sperm flagellar doublet microtubules. Interacts with TEKT3. Ubiquitinated, leading to its degradation. Deubiquitinated by USP16, promoting its stability. Strongly expressed in germ cells of the testis (at protein level). Expressed in spermatozoa. Also detected in brain.

It is found in the cytoplasm. It localises to the cytoskeleton. Its subcellular location is the flagellum axoneme. Functionally, sperm-specific microtubule inner protein (MIP) part of the dynein-decorated doublet microtubules (DMTs) in flagellar axoneme. Forms an extensive interaction network in different conformations that reinforces the helix bundle composed by other tektin proteins (TEKT1 to TEKT4) and MIPs to anchor the tektin bundle onto the tubulin wall of A-tubule of the sperm flagellum. This is Tektin-5 from Mus musculus (Mouse).